A 132-amino-acid polypeptide reads, in one-letter code: Large-conductance mechanosensitive channel (132 aa).

The next 3 membrane-spanning stretches (helical) occupy residues 14-34, 38-58, and 67-87; these read VVDLAVGVVIGAAFGKIVSSL, IITPLLGMVLGGVNFTDLHFG, and GNFIQTIFDFLIIAASIFMFI.

The protein belongs to the MscL family. In terms of assembly, homopentamer.

The protein localises to the cell membrane. Its function is as follows. Channel that opens in response to stretch forces in the membrane lipid bilayer. May participate in the regulation of osmotic pressure changes within the cell. This chain is Large-conductance mechanosensitive channel, found in Bacillus cereus (strain G9842).